Reading from the N-terminus, the 271-residue chain is Putative phosphoenolpyruvate synthase regulatory protein (271 aa).

ADP is bound at residue 152-159 (GVSRCGKT).

The protein belongs to the pyruvate, phosphate/water dikinase regulatory protein family. PSRP subfamily.

The catalysed reaction is [pyruvate, water dikinase] + ADP = [pyruvate, water dikinase]-phosphate + AMP + H(+). The enzyme catalyses [pyruvate, water dikinase]-phosphate + phosphate + H(+) = [pyruvate, water dikinase] + diphosphate. Bifunctional serine/threonine kinase and phosphorylase involved in the regulation of the phosphoenolpyruvate synthase (PEPS) by catalyzing its phosphorylation/dephosphorylation. The protein is Putative phosphoenolpyruvate synthase regulatory protein of Legionella pneumophila (strain Lens).